Consider the following 407-residue polypeptide: Heparan-sulfate 6-O-sulfotransferase 1-B (407 aa).

The Cytoplasmic segment spans residues 8–14 (MVERTSK). Residues 15-35 (FLLIVVGSVFFMLILYQYVAP) traverse the membrane as a helical; Signal-anchor for type II membrane protein segment. Residues 36 to 407 (GVINFGSPHG…DYMNHIINGW (372 aa)) lie on the Lumenal side of the membrane. 92 to 100 (HIQKTGGTT) contacts 3'-phosphoadenylyl sulfate. Substrate contacts are provided by residues 122–123 (KK), R139, W144, and H149. The active-site Proton acceptor is H149. Residues R183 and S191 each coordinate 3'-phosphoadenylyl sulfate. Substrate contacts are provided by H195 and W202. N-linked (GlcNAc...) asparagine glycosylation is present at N262. 315–317 (MQY) provides a ligand contact to 3'-phosphoadenylyl sulfate. Residue N318 is glycosylated (N-linked (GlcNAc...) asparagine). Residue 321–322 (RA) participates in 3'-phosphoadenylyl sulfate binding. N329 carries an N-linked (GlcNAc...) asparagine glycan.

It belongs to the sulfotransferase 6 family. In terms of tissue distribution, during early somitogenesis, first expressed in floor plate and somites. During mid-somitogenesis, expressed strongly in somites and more weakly in eye and hindbrain. During late somitogenesis, expressed in eye, hindbrain and posterior somites. At 24 hours post-fertilization (hpf), expressed in lens, forebrain, hindbrain, otic vesicle, anterior spinal cord neurons and posterior somites. At 36 hpf, expressed in the retinal ciliary marginal zone, brain, pancreas and weakly in pectoral fin. At 48 hpf, expressed in the retinal ciliary marginal zone, retinal ganglion cells, rhombomeres, otic vesicle and weakly in pectoral fin.

The protein localises to the membrane. It carries out the reaction alpha-D-glucosaminyl-[heparan sulfate](n) + 3'-phosphoadenylyl sulfate = 6-sulfo-alpha-D-glucosaminyl-[heparan sulfate](n) + adenosine 3',5'-bisphosphate + H(+). Functionally, 6-O-sulfation enzyme which catalyzes the transfer of sulfate from 3'-phosphoadenosine 5'-phosphosulfate (PAPS) to position 6 of the N-sulfoglucosamine residue (GlcNS) of heparan sulfate. This chain is Heparan-sulfate 6-O-sulfotransferase 1-B, found in Danio rerio (Zebrafish).